A 129-amino-acid chain; its full sequence is Copper chaperone GriE (129 aa).

A signal peptide (tat-type signal) is located at residues 1–37; sequence MPMNRREMVMATTGAALAAAAAVPLLSGGEGEGAAEA. Residues 32 to 51 form a disordered region; it reads EGAAEAAAAPAKATGRGREH. Residues 34 to 45 show a composition bias toward low complexity; sequence AAEAAAAPAKAT.

This sequence belongs to the melC1 family. Predicted to be exported by the Tat system. The position of the signal peptide cleavage has not been experimentally proven.

Functionally, involved in the transfer of Cu(2+) ions to the apo form of o-aminophenol oxidase GriF in the grixazone biosynthetic pathway. In Streptomyces griseus subsp. griseus (strain JCM 4626 / CBS 651.72 / NBRC 13350 / KCC S-0626 / ISP 5235), this protein is Copper chaperone GriE (griE).